The chain runs to 255 residues: Cell division protein DivIB (255 aa).

Over 1–30 (MKNSKVIKLQDRVPKLKNQKKRNKPPVNHR) the chain is Cytoplasmic. The chain crosses the membrane as a helical span at residues 31–51 (LILYISILFLLVLFLIYFRSP). Topologically, residues 52 to 255 (LSNIKKISVF…FKYLDDEKKK (204 aa)) are extracellular. The POTRA domain occupies 53-121 (SNIKKISVFG…NKIDIHIEEY (69 aa)).

The protein belongs to the FtsQ/DivIB family. DivIB subfamily.

It localises to the cell membrane. In terms of biological role, cell division protein that may be involved in stabilizing or promoting the assembly of the division complex. This is Cell division protein DivIB from Bacillus cytotoxicus (strain DSM 22905 / CIP 110041 / 391-98 / NVH 391-98).